Here is a 108-residue protein sequence, read N- to C-terminus: Large ribosomal subunit protein bL21 (108 aa).

This sequence belongs to the bacterial ribosomal protein bL21 family. Part of the 50S ribosomal subunit. Contacts protein L20.

This protein binds to 23S rRNA in the presence of protein L20. This chain is Large ribosomal subunit protein bL21, found in Orientia tsutsugamushi (strain Ikeda) (Rickettsia tsutsugamushi).